The sequence spans 108 residues: MESEGRRVVHIGLPELTEEQIIEVGELAQRVVIKHVFDALNRSDVKDIEVTTRINRGETLDLELEVYLEVPVFVKVDVERLIDEAVEKAYAAVEKKLREIANEGQDKA.

Belongs to the UPF0440 family.

This is an uncharacterized protein from Thermococcus kodakarensis (strain ATCC BAA-918 / JCM 12380 / KOD1) (Pyrococcus kodakaraensis (strain KOD1)).